A 115-amino-acid chain; its full sequence is Pancreatic progenitor cell differentiation and proliferation factor (115 aa).

S9 is modified (phosphoserine). Disordered stretches follow at residues 21-46 and 73-115; these read LGSS…SPGL and ESPE…RDLS. A compositionally biased stretch (low complexity) spans 22–32; the sequence is GSSSSSSSGGS. Over residues 106 to 115 the composition is skewed to polar residues; that stretch reads SGQTNPRDLS.

The protein belongs to the PPDPF family.

Probable regulator of exocrine pancreas development. This chain is Pancreatic progenitor cell differentiation and proliferation factor (Ppdpf), found in Mus musculus (Mouse).